A 325-amino-acid chain; its full sequence is MLIKELSEQVKKDLKDYFQERDYMVIAVPKKEPVRVYVVKATNTVETARRIHNLSPSATVAMGRAIVGALLLTSLLKHGTNQKLLLKIEGDGPIGTIVVEADAKGRVRGFVGNPNVDTYTKEVEGKKKFDVAKIVGKGTLTVVKDLGMGKPYTSVVPLISGEIGQDIAYYLYQSEQTPSAVAVGVKVNEDGSVKHAGGYLVQTLGGTSEKVKELLEKRILSLPPVTEMMEKGMRPEDIAVEILKDMEPQLIGLKEVEYYCPCDEEVAKASLFLMSTQELEDLFNENELAEVSCNFCGRIYRFDRSVIEEKRELEKKKGENGEKKD.

Intrachain disulfides connect Cys-260/Cys-262 and Cys-293/Cys-296.

It belongs to the HSP33 family. In terms of processing, under oxidizing conditions two disulfide bonds are formed involving the reactive cysteines. Under reducing conditions zinc is bound to the reactive cysteines and the protein is inactive.

It localises to the cytoplasm. Redox regulated molecular chaperone. Protects both thermally unfolding and oxidatively damaged proteins from irreversible aggregation. Plays an important role in the bacterial defense system toward oxidative stress. The chain is 33 kDa chaperonin from Aquifex aeolicus (strain VF5).